We begin with the raw amino-acid sequence, 178 residues long: Cytochrome b6-f complex iron-sulfur subunit (178 aa).

A helical transmembrane segment spans residues 20–42 (LLTFGTATGVALGALYPVANYFM). The Rieske domain maps to 65 to 161 (KTGWLATHQA…VDIEDDAVLV (97 aa)). 4 residues coordinate [2Fe-2S] cluster: cysteine 107, histidine 109, cysteine 125, and histidine 128. Cysteines 112 and 127 form a disulfide.

This sequence belongs to the Rieske iron-sulfur protein family. As to quaternary structure, the 4 large subunits of the cytochrome b6-f complex are cytochrome b6, subunit IV (17 kDa polypeptide, PetD), cytochrome f and the Rieske protein, while the 4 small subunits are PetG, PetL, PetM and PetN. The complex functions as a dimer. [2Fe-2S] cluster is required as a cofactor.

The protein resides in the cellular thylakoid membrane. It catalyses the reaction 2 oxidized [plastocyanin] + a plastoquinol + 2 H(+)(in) = 2 reduced [plastocyanin] + a plastoquinone + 4 H(+)(out). In terms of biological role, component of the cytochrome b6-f complex, which mediates electron transfer between photosystem II (PSII) and photosystem I (PSI), cyclic electron flow around PSI, and state transitions. In Prochlorococcus marinus (strain MIT 9215), this protein is Cytochrome b6-f complex iron-sulfur subunit.